A 155-amino-acid polypeptide reads, in one-letter code: Small ribosomal subunit protein uS7 (155 aa).

The protein belongs to the universal ribosomal protein uS7 family. Part of the 30S ribosomal subunit. Contacts proteins S9 and S11.

One of the primary rRNA binding proteins, it binds directly to 16S rRNA where it nucleates assembly of the head domain of the 30S subunit. Is located at the subunit interface close to the decoding center, probably blocks exit of the E-site tRNA. In Xylella fastidiosa (strain M12), this protein is Small ribosomal subunit protein uS7.